We begin with the raw amino-acid sequence, 220 residues long: Flagellin A2 (220 aa).

A propeptide spanning residues 1–11 (MFNNITDDDRG) is cleaved from the precursor. Asn78, Asn95, Asn112, and Asn124 each carry an N-linked (GlcNAc...) asparagine glycan.

This sequence belongs to the archaeal flagellin family. In terms of processing, glycosylated by a pentasaccharide similar to the S-layer glycoprotein, probably comprising a hexose, 2 hexuronic acids, a methyl ester of a hexuronic acid and mannose.

The protein resides in the archaeal flagellum. In terms of biological role, flagellin that plays both structural and regulatory roles in flagella biosynthesis. Does not constitute a major flagellin in terms of abundance contrary to FlgA1: may regulate the flagella-dependent swimming motility depending on the relative abundance of FlgA1. Not involved in PibD-dependent surface adhesion. This chain is Flagellin A2 (flgA2), found in Haloferax volcanii (strain ATCC 29605 / DSM 3757 / JCM 8879 / NBRC 14742 / NCIMB 2012 / VKM B-1768 / DS2) (Halobacterium volcanii).